Consider the following 820-residue polypeptide: Crinkler effector protein 108 (820 aa).

A signal peptide spans 1-17; sequence MVKLYCAVVGVAGSAFS. Positions 18-55 are LQLFLAK domain; it reads VRVDESDTVDDLKDAIKAKKPNDFKDIDADKLELYVAK. A DWL domain region spans residues 58 to 111; that stretch reads GVWLTEADVKSGVADITGLVRLEVVRAKLFSVGLSDEVVSEVDAQEEAAGRGPV. The HVLVXXP motif motif lies at 112 to 117; sequence NVLVVV. The Host nuclear localization signal motif lies at 118–124; the sequence is PMKKRRV. A C-terminal DC effector domain region spans residues 125–820; the sequence is DAGVDEERRF…MHYDDDEADL (696 aa). N-linked (GlcNAc...) asparagine glycosylation is found at N268, N371, and N703. A hhH DNA-binding domain region spans residues 754 to 791; the sequence is NINTASFHELRRLEGVGDATAAKIIAERTIRRFSNLED.

The protein belongs to the Crinkler effector family.

Its subcellular location is the secreted. It localises to the host nucleus. Secreted effector that suppresses plant basal defense and promotes plant susceptibility via targeting promoters of host HSP gene and thus inhibiting their expression. CRN108 binds directly to heat shock elements (HSEs) 5'-GAAnnTTC-3' and interferes with the association of the HSE with the plant heat shock transcription factors, which initializes HSP gene expression in response to stress. This chain is Crinkler effector protein 108, found in Phytophthora sojae (Soybean stem and root rot agent).